The primary structure comprises 359 residues: uncharacterized protein (359 aa).

The PINc domain occupies 163–275 (VVDTSCIIDG…SKVANLQKVQ (113 aa)). Mg(2+) contacts are provided by aspartate 165 and aspartate 244. The region spanning 289–350 (IYLPGDSLEL…LQTSAGRMIF (62 aa)) is the TRAM domain.

It belongs to the ycf81 family. In the central section; belongs to the PINc/VapC protein family. The cofactor is Mg(2+).

Functionally, an RNase. This is an uncharacterized protein from Synechocystis sp. (strain ATCC 27184 / PCC 6803 / Kazusa).